A 451-amino-acid chain; its full sequence is Chromosomal replication initiator protein DnaA (451 aa).

The interval 1–77 (MTENEQIFWN…EVYNAQISVD (77 aa)) is domain I, interacts with DnaA modulators. The domain II stretch occupies residues 77–110 (DYVFEEDLMIEQNQTKINQKPKQQALNSLPTVTS). The tract at residues 111-329 (DLNPKYSFEN…GALKDISLVA (219 aa)) is domain III, AAA+ region. ATP contacts are provided by glycine 155, glycine 157, lysine 158, and threonine 159. Positions 330–451 (NFKQIDTITV…EIETIKNKIK (122 aa)) are domain IV, binds dsDNA.

It belongs to the DnaA family. Oligomerizes as a right-handed, spiral filament on DNA at oriC.

The protein resides in the cytoplasm. Functionally, plays an essential role in the initiation and regulation of chromosomal replication. ATP-DnaA binds to the origin of replication (oriC) to initiate formation of the DNA replication initiation complex once per cell cycle. Binds the DnaA box (a 9 base pair repeat at the origin) and separates the double-stranded (ds)DNA. Forms a right-handed helical filament on oriC DNA; dsDNA binds to the exterior of the filament while single-stranded (ss)DNA is stabiized in the filament's interior. The ATP-DnaA-oriC complex binds and stabilizes one strand of the AT-rich DNA unwinding element (DUE), permitting loading of DNA polymerase. After initiation quickly degrades to an ADP-DnaA complex that is not apt for DNA replication. Binds acidic phospholipids. The protein is Chromosomal replication initiator protein DnaA of Streptococcus pyogenes serotype M4 (strain MGAS10750).